The sequence spans 892 residues: Alanine--tRNA ligase (892 aa).

Residues His577, His581, Cys680, and His684 each coordinate Zn(2+).

Belongs to the class-II aminoacyl-tRNA synthetase family. Zn(2+) serves as cofactor.

The protein localises to the cytoplasm. The catalysed reaction is tRNA(Ala) + L-alanine + ATP = L-alanyl-tRNA(Ala) + AMP + diphosphate. Functionally, catalyzes the attachment of alanine to tRNA(Ala) in a two-step reaction: alanine is first activated by ATP to form Ala-AMP and then transferred to the acceptor end of tRNA(Ala). Also edits incorrectly charged Ser-tRNA(Ala) and Gly-tRNA(Ala) via its editing domain. In Arthrobacter sp. (strain FB24), this protein is Alanine--tRNA ligase.